Consider the following 381-residue polypeptide: Chaperone protein DnaJ (381 aa).

Positions 5–69 constitute a J domain; sequence DYYEVLGVSK…EKRARYDRFG (65 aa). The segment at 136 to 218 adopts a CR-type zinc-finger fold; sequence GKETEIEVPH…CGGTGHVKKR (83 aa). Zn(2+) contacts are provided by Cys149, Cys152, Cys166, Cys169, Cys192, Cys195, Cys206, and Cys209. CXXCXGXG motif repeat units lie at residues 149 to 156, 166 to 173, 192 to 199, and 206 to 213; these read CDTCHGSG, CPHCHGSG, CPVCGGTG, and CPTCGGTG. Residues 154–174 are disordered; it reads GSGAKPGTSPQSCPHCHGSGQ.

Belongs to the DnaJ family. As to quaternary structure, homodimer. Requires Zn(2+) as cofactor.

The protein resides in the cytoplasm. In terms of biological role, participates actively in the response to hyperosmotic and heat shock by preventing the aggregation of stress-denatured proteins and by disaggregating proteins, also in an autonomous, DnaK-independent fashion. Unfolded proteins bind initially to DnaJ; upon interaction with the DnaJ-bound protein, DnaK hydrolyzes its bound ATP, resulting in the formation of a stable complex. GrpE releases ADP from DnaK; ATP binding to DnaK triggers the release of the substrate protein, thus completing the reaction cycle. Several rounds of ATP-dependent interactions between DnaJ, DnaK and GrpE are required for fully efficient folding. Also involved, together with DnaK and GrpE, in the DNA replication of plasmids through activation of initiation proteins. The sequence is that of Chaperone protein DnaJ from Geobacillus thermodenitrificans (strain NG80-2).